The chain runs to 356 residues: Cytochrome c oxidase subunit 2 (356 aa).

An N-terminal signal peptide occupies residues 1 to 20 (MVKHWRLILLLALVPLLLSG). The N-palmitoyl cysteine moiety is linked to residue Cys21. Cys21 is lipidated: S-diacylglycerol cysteine. The Extracellular portion of the chain corresponds to 21 to 47 (CGKPFLSTLKPAGEVADKQYDLTVLST). Residues 21–257 (CGKPFLSTLK…KNYKSTAESD (237 aa)) form a cytochrome c oxidase subunit II region. A helical transmembrane segment spans residues 48 to 66 (LIMVVVVAVVSVIFFYVIV). At 67 to 87 (RFRRSRVGENTIPKQVEGNKF) the chain is on the cytoplasmic side. The chain crosses the membrane as a helical span at residues 88 to 106 (LEITWTVIPILLLIILVIP). Residues 107–356 (VVLYTLELAD…YLKGLKAESK (250 aa)) lie on the Extracellular side of the membrane. Residues His176, Cys217, Cys221, and His225 each contribute to the Cu cation site. Residues 258 to 356 (LAKQGEELFK…YLKGLKAESK (99 aa)) enclose the Cytochrome c domain. 4 residues coordinate heme c: Cys271, Cys274, His275, and Met329.

The protein belongs to the cytochrome c oxidase subunit 2 family. It depends on Cu cation as a cofactor. Requires heme c as cofactor.

Its subcellular location is the cell membrane. It carries out the reaction 4 Fe(II)-[cytochrome c] + O2 + 8 H(+)(in) = 4 Fe(III)-[cytochrome c] + 2 H2O + 4 H(+)(out). Subunits I and II form the functional core of the enzyme complex. Electrons originating in cytochrome c are transferred via heme a and Cu(A) to the binuclear center formed by heme a3 and Cu(B). In Bacillus subtilis (strain 168), this protein is Cytochrome c oxidase subunit 2 (ctaC).